The sequence spans 298 residues: Inosose dehydratase (298 aa).

It belongs to the IolE/MocC family. The cofactor is glutathione. Co(2+) serves as cofactor. Mn(2+) is required as a cofactor.

It carries out the reaction scyllo-inosose = 3D-3,5/4-trihydroxycyclohexane-1,2-dione + H2O. It participates in polyol metabolism; myo-inositol degradation into acetyl-CoA; acetyl-CoA from myo-inositol: step 2/7. Its function is as follows. Catalyzes the dehydration of inosose (2-keto-myo-inositol, 2KMI or 2,4,6/3,5-pentahydroxycyclohexanone) to 3D-(3,5/4)-trihydroxycyclohexane-1,2-dione (D-2,3-diketo-4-deoxy-epi-inositol). The protein is Inosose dehydratase of Bacillus velezensis (strain DSM 23117 / BGSC 10A6 / LMG 26770 / FZB42) (Bacillus amyloliquefaciens subsp. plantarum).